Reading from the N-terminus, the 217-residue chain is Large ribosomal subunit protein uL3 (217 aa).

The interval Gly-127–Ala-162 is disordered. Over residues Ala-142–Gly-153 the composition is skewed to low complexity.

Belongs to the universal ribosomal protein uL3 family. Part of the 50S ribosomal subunit. Forms a cluster with proteins L14 and L19.

Functionally, one of the primary rRNA binding proteins, it binds directly near the 3'-end of the 23S rRNA, where it nucleates assembly of the 50S subunit. This chain is Large ribosomal subunit protein uL3, found in Prochlorococcus marinus (strain MIT 9301).